Reading from the N-terminus, the 727-residue chain is Prolyl endopeptidase-like (727 aa).

Residues S559, D645, and H690 each act as charge relay system in the active site.

Belongs to the peptidase S9A family. In terms of assembly, homodimer. Interacts with the AP-1 complex.

It localises to the cytoplasm. Its subcellular location is the cytosol. It is found in the golgi apparatus. The protein resides in the trans-Golgi network. The protein localises to the cytoskeleton. It localises to the nucleus. Serine peptidase whose precise substrate specificity remains unclear. Does not cleave peptides after a arginine or lysine residue. Regulates trans-Golgi network morphology and sorting by regulating the membrane binding of the AP-1 complex. May play a role in the regulation of synaptic vesicle exocytosis. The sequence is that of Prolyl endopeptidase-like (PREPL) from Pongo abelii (Sumatran orangutan).